The primary structure comprises 197 residues: NADH-quinone oxidoreductase subunit C (197 aa).

Belongs to the complex I 30 kDa subunit family. As to quaternary structure, NDH-1 is composed of 14 different subunits. Subunits NuoB, C, D, E, F, and G constitute the peripheral sector of the complex.

It is found in the cell inner membrane. It carries out the reaction a quinone + NADH + 5 H(+)(in) = a quinol + NAD(+) + 4 H(+)(out). NDH-1 shuttles electrons from NADH, via FMN and iron-sulfur (Fe-S) centers, to quinones in the respiratory chain. The immediate electron acceptor for the enzyme in this species is believed to be ubiquinone. Couples the redox reaction to proton translocation (for every two electrons transferred, four hydrogen ions are translocated across the cytoplasmic membrane), and thus conserves the redox energy in a proton gradient. This is NADH-quinone oxidoreductase subunit C from Neisseria gonorrhoeae (strain ATCC 700825 / FA 1090).